Here is a 450-residue protein sequence, read N- to C-terminus: tRNA modification GTPase MnmE (450 aa).

(6S)-5-formyl-5,6,7,8-tetrahydrofolate contacts are provided by lysine 21, glutamate 78, and lysine 117. One can recognise a TrmE-type G domain in the interval 213 to 376; that stretch reads GHALSIVGKP…LSQKISAFFP (164 aa). K(+) is bound at residue asparagine 223. GTP-binding positions include 223 to 228, 242 to 248, and 267 to 270; these read NAGKSS, SDIKGTT, and DTAG. Serine 227 serves as a coordination point for Mg(2+). K(+)-binding residues include serine 242, isoleucine 244, and threonine 247. Threonine 248 is a binding site for Mg(2+). Position 450 (lysine 450) interacts with (6S)-5-formyl-5,6,7,8-tetrahydrofolate.

It belongs to the TRAFAC class TrmE-Era-EngA-EngB-Septin-like GTPase superfamily. TrmE GTPase family. As to quaternary structure, homodimer. Heterotetramer of two MnmE and two MnmG subunits. K(+) is required as a cofactor.

The protein resides in the cytoplasm. Its function is as follows. Exhibits a very high intrinsic GTPase hydrolysis rate. Involved in the addition of a carboxymethylaminomethyl (cmnm) group at the wobble position (U34) of certain tRNAs, forming tRNA-cmnm(5)s(2)U34. This is tRNA modification GTPase MnmE from Helicobacter pylori (strain Shi470).